Consider the following 179-residue polypeptide: Large ribosomal subunit protein uL5 (179 aa).

It belongs to the universal ribosomal protein uL5 family. As to quaternary structure, part of the 50S ribosomal subunit; part of the 5S rRNA/L5/L18/L25 subcomplex. Contacts the 5S rRNA and the P site tRNA. Forms a bridge to the 30S subunit in the 70S ribosome.

This is one of the proteins that bind and probably mediate the attachment of the 5S RNA into the large ribosomal subunit, where it forms part of the central protuberance. In the 70S ribosome it contacts protein S13 of the 30S subunit (bridge B1b), connecting the 2 subunits; this bridge is implicated in subunit movement. Contacts the P site tRNA; the 5S rRNA and some of its associated proteins might help stabilize positioning of ribosome-bound tRNAs. This chain is Large ribosomal subunit protein uL5, found in Pectobacterium carotovorum subsp. carotovorum (strain PC1).